The chain runs to 359 residues: Photosystem II protein D1 1 (359 aa).

Helical transmembrane passes span 29–46 (YVGW…AATI), 118–133 (HFLI…EWEL), and 142–156 (WICV…AASA). Residue His118 coordinates chlorophyll a. Tyr126 provides a ligand contact to pheophytin a. Positions 170 and 189 each coordinate [CaMn4O5] cluster. The helical transmembrane segment at 197–218 (FHMLGVAGVFGGSLFSAMHGSL) threads the bilayer. His198 contacts chlorophyll a. A quinone contacts are provided by residues His215 and 264-265 (SF). A Fe cation-binding site is contributed by His215. Residue His272 participates in Fe cation binding. The chain crosses the membrane as a helical span at residues 274–288 (FLAAWPVVGIWFTAL). Positions 332, 333, 342, and 344 each coordinate [CaMn4O5] cluster. Positions 345–359 (AAESTPVALQAPAIG) are excised as a propeptide.

Belongs to the reaction center PufL/M/PsbA/D family. PSII is composed of 1 copy each of membrane proteins PsbA, PsbB, PsbC, PsbD, PsbE, PsbF, PsbH, PsbI, PsbJ, PsbK, PsbL, PsbM, PsbT, PsbX, PsbY, PsbZ, Psb30/Ycf12, peripheral proteins PsbO, CyanoQ (PsbQ), PsbU, PsbV and a large number of cofactors. It forms dimeric complexes. Requires The D1/D2 heterodimer binds P680, chlorophylls that are the primary electron donor of PSII, and subsequent electron acceptors. It shares a non-heme iron and each subunit binds pheophytin, quinone, additional chlorophylls, carotenoids and lipids. D1 provides most of the ligands for the Mn4-Ca-O5 cluster of the oxygen-evolving complex (OEC). There is also a Cl(-1) ion associated with D1 and D2, which is required for oxygen evolution. The PSII complex binds additional chlorophylls, carotenoids and specific lipids. as cofactor. In terms of processing, tyr-161 forms a radical intermediate that is referred to as redox-active TyrZ, YZ or Y-Z. C-terminally processed by CtpA; processing is essential to allow assembly of the oxygen-evolving complex and thus photosynthetic growth.

Its subcellular location is the cellular thylakoid membrane. It catalyses the reaction 2 a plastoquinone + 4 hnu + 2 H2O = 2 a plastoquinol + O2. Functionally, photosystem II (PSII) is a light-driven water:plastoquinone oxidoreductase that uses light energy to abstract electrons from H(2)O, generating O(2) and a proton gradient subsequently used for ATP formation. It consists of a core antenna complex that captures photons, and an electron transfer chain that converts photonic excitation into a charge separation. The D1/D2 (PsbA/PsbD) reaction center heterodimer binds P680, the primary electron donor of PSII as well as several subsequent electron acceptors. The sequence is that of Photosystem II protein D1 1 from Parasynechococcus marenigrum (strain WH8102).